The chain runs to 1720 residues: DNA-directed RNA polymerase I subunit RPA1 (1720 aa).

The Zn(2+) site is built by cysteine 64, cysteine 67, cysteine 74, histidine 77, cysteine 104, and cysteine 107. The segment at 110–201 (LTCPRAVIHL…IALFWKAHMN (92 aa)) is clamp. 2 residues coordinate Zn(2+): cysteine 205 and cysteine 208. A Phosphoserine modification is found at serine 240. A clamp region spans residues 320–426 (FTNGQTVNLQ…IRQILEKKEG (107 aa)). The interval 403-416 (DSEMDKLMMDKYPG) is rudder. Lysine 424, arginine 429, and arginine 436 together coordinate DNA. The interval 468-542 (YPQPVTPWNV…QGTKIVCRHV (75 aa)) is involved in RRN3 binding to Pol I complex. Position 552 (arginine 552) interacts with RNA. Mg(2+) is bound by residues aspartate 588, aspartate 590, and aspartate 592. Residue aspartate 592 coordinates RNA. Residues 805-883 (KPKADVKRQR…NEINKACMPF (79 aa)) are funnel. The interval 960–1001 (KPPEFFFHCMAGREGLVDTAVKTSRSGYLQRCIIKHLEGLVV) is bridging helix. The mediates the interaction with TOP2A stretch occupies residues 1060 to 1155 (ADPKKALHHF…SLSVWRPDIY (96 aa)). The trigger loop stretch occupies residues 1207–1248 (PGEAVGLLAAQSIGEPSTQMTLNTFHFAGRGEMNVTLGIPRL). Residue arginine 1249 coordinates DNA. The tract at residues 1365 to 1498 (RNVNTRRATQ…SQEPQGPEAM (134 aa)) is disordered. Residues 1373-1390 (TQRDLDNAGELGRSRGEQ) are compositionally biased toward basic and acidic residues. Serine 1386 bears the Phosphoserine mark. Composition is skewed to acidic residues over residues 1391-1412 (EGDE…DADA) and 1422-1446 (EEEV…EDMQ). A compositionally biased stretch (basic and acidic residues) spans 1447–1461 (EERNPHREGARKTQE). Residues 1462–1474 (QDEEVGLGTEEDP) show a composition bias toward acidic residues.

The protein belongs to the RNA polymerase beta' chain family. As to quaternary structure, component of the RNA polymerase I (Pol I) complex consisting of 13 subunits: a ten-subunit catalytic core composed of POLR1A/RPA1, POLR1B/RPA2, POLR1C/RPAC1, POLR1D/RPAC2, POLR1H/RPA12, POLR2E/RPABC1, POLR2F/RPABC2, POLR2H/RPABC3, POLR2K/RPABC4 and POLR2L/RPABC5; a mobile stalk subunit POLR1F/RPA43 protruding from the core and additional subunits homologous to general transcription factors POLR1E/RPA49 and POLR1G/RPA34. Part of Pol I pre-initiation complex (PIC), in which Pol I core assembles with RRN3 and promoter-bound UTBF and SL1/TIF-IB complex. Interacts (via dock II domain) with TOP2A; this interaction may assist Pol I transcription initiation by releasing supercoils occurring during DNA unwinding. Interacts with CAVIN1; this interaction induces the dissociation of Pol I complex paused at rDNA terminator sequences. Interacts with MYO1C. Interacts with ERBB2. Interacts with DDX11. Interacts with RECQL5. Mg(2+) serves as cofactor.

The protein localises to the nucleus. It localises to the nucleolus. Its subcellular location is the chromosome. It catalyses the reaction RNA(n) + a ribonucleoside 5'-triphosphate = RNA(n+1) + diphosphate. Functionally, catalytic core component of RNA polymerase I (Pol I), a DNA-dependent RNA polymerase which synthesizes ribosomal RNA precursors using the four ribonucleoside triphosphates as substrates. Transcribes 47S pre-rRNAs from multicopy rRNA gene clusters, giving rise to 5.8S, 18S and 28S ribosomal RNAs. Pol I-mediated transcription cycle proceeds through transcription initiation, transcription elongation and transcription termination stages. During transcription initiation, Pol I pre-initiation complex (PIC) is recruited by the selectivity factor 1 (SL1/TIF-IB) complex bound to the core promoter that precedes an rDNA repeat unit. The PIC assembly bends the promoter favoring the formation of the transcription bubble and promoter escape. Once the polymerase has escaped from the promoter it enters the elongation phase during which RNA is actively polymerized, based on complementarity with the template DNA strand. Highly processive, assembles in structures referred to as 'Miller trees' where many elongating Pol I complexes queue and transcribe the same rDNA coding regions. At terminator sequences downstream of the rDNA gene, PTRF interacts with Pol I and halts Pol I transcription leading to the release of the RNA transcript and polymerase from the DNA. Forms Pol I active center together with the second largest subunit POLR1B/RPA2. Appends one nucleotide at a time to the 3' end of the nascent RNA, with POLR1A/RPA1 contributing a Mg(2+)-coordinating DxDGD motif, and POLR1B/RPA2 participating in the coordination of a second Mg(2+) ion and providing lysine residues believed to facilitate Watson-Crick base pairing between the incoming nucleotide and the template base. Typically, Mg(2+) ions direct a 5' nucleoside triphosphate to form a phosphodiester bond with the 3' hydroxyl of the preceding nucleotide of the nascent RNA, with the elimination of pyrophosphate. Has proofreading activity: Pauses and backtracks to allow the cleavage of a missincorporated nucleotide via POLR1H/RPA12. High Pol I processivity is associated with decreased transcription fidelity. This chain is DNA-directed RNA polymerase I subunit RPA1, found in Homo sapiens (Human).